A 218-amino-acid chain; its full sequence is tRNA (guanine-N(7)-)-methyltransferase (218 aa).

E45, E70, D97, and D119 together coordinate S-adenosyl-L-methionine. D119 is a catalytic residue. K123 serves as a coordination point for substrate. The segment at 125–130 (RHEKRR) is interaction with RNA. Residues D155 and 195–198 (TEYE) each bind substrate.

This sequence belongs to the class I-like SAM-binding methyltransferase superfamily. TrmB family.

It catalyses the reaction guanosine(46) in tRNA + S-adenosyl-L-methionine = N(7)-methylguanosine(46) in tRNA + S-adenosyl-L-homocysteine. It participates in tRNA modification; N(7)-methylguanine-tRNA biosynthesis. Catalyzes the formation of N(7)-methylguanine at position 46 (m7G46) in tRNA. This chain is tRNA (guanine-N(7)-)-methyltransferase, found in Lactobacillus acidophilus (strain ATCC 700396 / NCK56 / N2 / NCFM).